The chain runs to 500 residues: Cytochrome P450 81F1 (500 aa).

Residues 1–21 (MLYFILLPLLFLVISYKFLYS) traverse the membrane as a helical segment. A Glycyl lysine isopeptide (Lys-Gly) (interchain with G-Cter in ubiquitin) cross-link involves residue Lys-248. Cys-438 provides a ligand contact to heme.

Belongs to the cytochrome P450 family. Requires heme as cofactor.

Its subcellular location is the membrane. The protein operates within secondary metabolite biosynthesis. In terms of biological role, involved in indole glucosinolate biosynthesis. Catalyzes hydroxylation reactions of the glucosinolate indole ring. Converts indol-3-yl-methylglucosinolate (I3M) to 4-hydroxy-indol-3-yl-methylglucosinolate (4OH-I3M) and/or 1-hydroxy-indol-3-yl-methylglucosinolate (1OH-I3M) intermediates. These hydroxy intermediates are converted to 4-methoxy-indol-3-yl-methylglucosinolate (4MO-I3M) and 1-methoxy-indol-3-yl-methylglucosinolate (1MO-I3M) by indole glucosinolate methyltransferase 1 and 2 (IGMT1 and IGMT2). The protein is Cytochrome P450 81F1 of Arabidopsis thaliana (Mouse-ear cress).